The sequence spans 198 residues: MVTTYLLFIVAYLLGSIPFALVVGKIGYGIDIREHGSGNLGGTNTFRTLGKKAGFTVTIADILKGTLATSLPMVFGLDIHPLWFGLAAVLGHVYPIFAKFRGGKAVATSAGVLLCYSPVVFAILAVVFFTLLFTTRYVSLSSMVTAVVAVIASIVTGDKIFIIAMCLLAGMVIYKHRANIGRIINKTEPKANFSKKQK.

Transmembrane regions (helical) follow at residues 4-24, 71-91, 113-133, and 147-167; these read TYLLFIVAYLLGSIPFALVVG, LPMVFGLDIHPLWFGLAAVLG, LLCYSPVVFAILAVVFFTLLF, and VVAVIASIVTGDKIFIIAMCL.

Belongs to the PlsY family. In terms of assembly, probably interacts with PlsX.

It localises to the cell membrane. The enzyme catalyses an acyl phosphate + sn-glycerol 3-phosphate = a 1-acyl-sn-glycero-3-phosphate + phosphate. It functions in the pathway lipid metabolism; phospholipid metabolism. Functionally, catalyzes the transfer of an acyl group from acyl-phosphate (acyl-PO(4)) to glycerol-3-phosphate (G3P) to form lysophosphatidic acid (LPA). This enzyme utilizes acyl-phosphate as fatty acyl donor, but not acyl-CoA or acyl-ACP. The chain is Glycerol-3-phosphate acyltransferase 3 from Bacillus anthracis.